The primary structure comprises 82 residues: Large ribosomal subunit protein uL23 (82 aa).

The protein belongs to the universal ribosomal protein uL23 family. In terms of assembly, part of the 50S ribosomal subunit. Contacts protein L29.

Binds to 23S rRNA. One of the proteins that surrounds the polypeptide exit tunnel on the outside of the ribosome. The polypeptide is Large ribosomal subunit protein uL23 (Sulfurisphaera tokodaii (strain DSM 16993 / JCM 10545 / NBRC 100140 / 7) (Sulfolobus tokodaii)).